The sequence spans 234 residues: Purine nucleoside phosphorylase DeoD-type (234 aa).

His-4 contributes to the a purine D-ribonucleoside binding site. Residues Gly-20, Arg-24, Arg-43, and Arg-87 to Ser-90 each bind phosphate. Residues Glu-162, Glu-179–Glu-181, and Ser-203–Asp-204 each bind a purine D-ribonucleoside. Residue Asp-204 is the Proton donor of the active site.

The protein belongs to the PNP/UDP phosphorylase family. Homohexamer; trimer of homodimers.

The enzyme catalyses a purine D-ribonucleoside + phosphate = a purine nucleobase + alpha-D-ribose 1-phosphate. The catalysed reaction is a purine 2'-deoxy-D-ribonucleoside + phosphate = a purine nucleobase + 2-deoxy-alpha-D-ribose 1-phosphate. Catalyzes the reversible phosphorolytic breakdown of the N-glycosidic bond in the beta-(deoxy)ribonucleoside molecules, with the formation of the corresponding free purine bases and pentose-1-phosphate. This is Purine nucleoside phosphorylase DeoD-type from Jannaschia sp. (strain CCS1).